Here is a 145-residue protein sequence, read N- to C-terminus: 3-hydroxyacyl-[acyl-carrier-protein] dehydratase FabZ (145 aa).

Residue histidine 48 is part of the active site.

This sequence belongs to the thioester dehydratase family. FabZ subfamily.

The protein resides in the cytoplasm. It carries out the reaction a (3R)-hydroxyacyl-[ACP] = a (2E)-enoyl-[ACP] + H2O. Functionally, involved in unsaturated fatty acids biosynthesis. Catalyzes the dehydration of short chain beta-hydroxyacyl-ACPs and long chain saturated and unsaturated beta-hydroxyacyl-ACPs. This is 3-hydroxyacyl-[acyl-carrier-protein] dehydratase FabZ from Marinobacter nauticus (strain ATCC 700491 / DSM 11845 / VT8) (Marinobacter aquaeolei).